Consider the following 101-residue polypeptide: RNA silencing suppressor (101 aa).

Residues arginine 47–arginine 50 form a basic region. The segment at cysteine 57–cysteine 78 adopts a C4-type zinc-finger fold.

The protein belongs to the carlaviruses nucleic acid-binding protein family.

In terms of biological role, suppressor of viral-induced RNA silencing. The potential mechanism of action is based on sequestering siRNAs. The chain is RNA silencing suppressor (TUC) from Dianthus caryophyllus (Carnation).